The primary structure comprises 330 residues: Biotin synthase (330 aa).

The region spanning Asn-53–Ser-276 is the Radical SAM core domain. Residues Cys-68, Cys-72, and Cys-75 each contribute to the [4Fe-4S] cluster site. The [2Fe-2S] cluster site is built by Cys-112, Cys-144, Cys-204, and Arg-274.

This sequence belongs to the radical SAM superfamily. Biotin synthase family. As to quaternary structure, homodimer. Requires [4Fe-4S] cluster as cofactor. The cofactor is [2Fe-2S] cluster.

The catalysed reaction is (4R,5S)-dethiobiotin + (sulfur carrier)-SH + 2 reduced [2Fe-2S]-[ferredoxin] + 2 S-adenosyl-L-methionine = (sulfur carrier)-H + biotin + 2 5'-deoxyadenosine + 2 L-methionine + 2 oxidized [2Fe-2S]-[ferredoxin]. Its pathway is cofactor biosynthesis; biotin biosynthesis; biotin from 7,8-diaminononanoate: step 2/2. Catalyzes the conversion of dethiobiotin (DTB) to biotin by the insertion of a sulfur atom into dethiobiotin via a radical-based mechanism. In Streptococcus agalactiae serotype V (strain ATCC BAA-611 / 2603 V/R), this protein is Biotin synthase.